The following is a 483-amino-acid chain: Iron-sulfur cluster assembly SufBD family protein ycf24 (483 aa).

The protein belongs to the iron-sulfur cluster assembly SufBD family.

Its subcellular location is the plastid. It localises to the chloroplast. This chain is Iron-sulfur cluster assembly SufBD family protein ycf24 (ycf24), found in Guillardia theta (Cryptophyte).